The sequence spans 371 residues: uncharacterized protein (371 aa).

The interval 339 to 371 (KVTHEDLVKNRPRSPVRPPIPATAKTPDLPERH) is disordered.

This is an uncharacterized protein from Escherichia coli (strain K12).